The chain runs to 67 residues: Protein AaeX (67 aa).

Helical transmembrane passes span 3 to 23 (VLPV…EIIV) and 43 to 63 (LVWH…YVVS).

It belongs to the AaeX family.

Its subcellular location is the cell membrane. The protein is Protein AaeX of Erwinia tasmaniensis (strain DSM 17950 / CFBP 7177 / CIP 109463 / NCPPB 4357 / Et1/99).